The primary structure comprises 264 residues: Neurexophilin-2 (264 aa).

The first 22 residues, 1-22, serve as a signal peptide directing secretion; it reads MRLRPLPLVVVPGLLQLLFCDS. Positions 23–90 are II; sequence EKVVHATEGL…WDWLANITEV (68 aa). Residues Asn-86, Asn-139, Asn-149, and Asn-155 are each glycosylated (N-linked (GlcNAc...) asparagine). The interval 91–169 is III; sequence QEPLARTKRR…LVPPSKVVEF (79 aa). The tract at residues 170 to 178 is IV (linker domain); the sequence is EVSPQSTLE. The segment at 179–264 is v (Cys-rich); that stretch reads TKESKSFNCR…HSETPYLSSG (86 aa).

This sequence belongs to the neurexophilin family. In terms of processing, may be proteolytically processed at the boundary between the N-terminal non-conserved and the central conserved domain in neuron-like cells. Brain, only in a scattered subpopulation of neurons that probably represent inhibitory interneurons.

It localises to the secreted. Its function is as follows. May be signaling molecules that resemble neuropeptides and that act by binding to alpha-neurexins and possibly other receptors. The chain is Neurexophilin-2 (NXPH2) from Bos taurus (Bovine).